The chain runs to 831 residues: MTDNQEIKPKKLTLGNSKLSLNKSFDSLTGAQSFVNAKSKTLVEVRKSSTGSATTLSLNKERNSLDQTVIDANKEEFNRRLSILKKAAEQSQLNDPLKISTLSKLASINQSANSKIEPLETDKEVEQKQQNTEENKVEVSAKIVQDDEDIPSQIPKKKEETFVKSPLVGKRTRYGIESEKELDKTAESKIIAPKIKLEEPKKFKKADLFNMLSDDESGSGRTRSLAAIKRAREKEKRKLVSQAPEKVYREVTIPEAIGVGDLANAMSERVADVIKELMKLGILANASQTIDADTAELVATNLGHTVKRVQESDVENVLISDDKVEDLRTRAPVVTVMGHVDHGKTSLLDSLKSTDIAAGELGGITQHIGAYRVTLADGRAITFIDTPGHEAFSEMRSRGAKVTDIVIIVVAADDGIKTQTVEAINHAKAAGVPIIVAINKIDKPDIDIERVKNELYVHEIIGEEAGGDIMIIPISALKKINLDKLEEAILLIAEMQDLKANPFGSAAGVVIESKIEQGRGTLTTILVQRGTLRNSDIIIAGTAYGKVKKMTNDKGLEIVEATPSVPVEIQGLNEVPFAGDKFNVVQNEKQAKDIAEYRMRLAKEKKISIAPRSSLEDLFLKASGNSKIKELPLIIKGDVQGSVEAISGSLLKLPSDEIKLRILHSGVGPITESDVSLAHASSAIIVGFNVRAGANALTAAEKEKVDIRYYSIIYHLIDDIKAIMSGMLDPIVREQYIGSAEMRQIFNITKVGKIAGSYVTKGIIKKGAGVRLLRDNVVIHEGKLKTLKRFKDEVKEVREGYECGIAFENYQDIREGDTVEVFELIQEQRQL.

Positions 116–157 are disordered; sequence IEPLETDKEVEQKQQNTEENKVEVSAKIVQDDEDIPSQIPKK. The span at 117 to 139 shows a compositional bias: basic and acidic residues; the sequence is EPLETDKEVEQKQQNTEENKVEV. A tr-type G domain is found at 329–499; it reads TRAPVVTVMG…LLIAEMQDLK (171 aa). A G1 region spans residues 338–345; that stretch reads GHVDHGKT. Position 338 to 345 (338 to 345) interacts with GTP; it reads GHVDHGKT. Residues 363–367 are G2; the sequence is GITQH. A G3 region spans residues 385-388; the sequence is DTPG. GTP contacts are provided by residues 385-389 and 439-442; these read DTPGH and NKID. Residues 439–442 are G4; that stretch reads NKID. The interval 475–477 is G5; sequence SAL.

Belongs to the TRAFAC class translation factor GTPase superfamily. Classic translation factor GTPase family. IF-2 subfamily.

It localises to the cytoplasm. Functionally, one of the essential components for the initiation of protein synthesis. Protects formylmethionyl-tRNA from spontaneous hydrolysis and promotes its binding to the 30S ribosomal subunits. Also involved in the hydrolysis of GTP during the formation of the 70S ribosomal complex. This Rickettsia conorii (strain ATCC VR-613 / Malish 7) protein is Translation initiation factor IF-2.